The chain runs to 180 residues: Large ribosomal subunit protein uL6 (180 aa).

Belongs to the universal ribosomal protein uL6 family. In terms of assembly, part of the 50S ribosomal subunit.

Its function is as follows. This protein binds to the 23S rRNA, and is important in its secondary structure. It is located near the subunit interface in the base of the L7/L12 stalk, and near the tRNA binding site of the peptidyltransferase center. The chain is Large ribosomal subunit protein uL6 from Clostridium botulinum (strain Langeland / NCTC 10281 / Type F).